The following is a 637-amino-acid chain: Probable serine/threonine-protein kinase DDB_G0283065 (637 aa).

Disordered regions lie at residues 36-88 and 155-234; these read NNNN…KFNR and NSNN…RFNN. Positions 53–85 are enriched in low complexity; that stretch reads NNSTTKSIDNNNNNTNNSNSNNNNNDNIKNNNK. Residues 236 to 629 form the Protein kinase domain; that stretch reads FNDVRVLGKG…NQISTDYDNF (394 aa). Residues 242-250 and lysine 265 contribute to the ATP site; that span reads LGKGGFGIV. The active-site Proton acceptor is aspartate 479.

The protein belongs to the protein kinase superfamily. Ser/Thr protein kinase family. GCN2 subfamily.

It catalyses the reaction L-seryl-[protein] + ATP = O-phospho-L-seryl-[protein] + ADP + H(+). It carries out the reaction L-threonyl-[protein] + ATP = O-phospho-L-threonyl-[protein] + ADP + H(+). The protein is Probable serine/threonine-protein kinase DDB_G0283065 of Dictyostelium discoideum (Social amoeba).